Consider the following 139-residue polypeptide: Putative pre-16S rRNA nuclease (139 aa).

The protein belongs to the YqgF nuclease family.

Its subcellular location is the cytoplasm. In terms of biological role, could be a nuclease involved in processing of the 5'-end of pre-16S rRNA. The sequence is that of Putative pre-16S rRNA nuclease from Streptococcus pyogenes serotype M1.